Reading from the N-terminus, the 310-residue chain is GPN-loop GTPase 2 (310 aa).

Ala-2 is modified (N-acetylalanine). 19 to 24 (GSGKTT) provides a ligand contact to GTP. The Gly-Pro-Asn (GPN)-loop; involved in dimer interface signature appears at 76-78 (GPN). Residue 178 to 181 (SKMD) participates in GTP binding.

This sequence belongs to the GPN-loop GTPase family. Heterodimers with GPN1 or GPN3. Binds to RNA polymerase II (RNAPII).

Small GTPase required for proper localization of RNA polymerase II and III (RNAPII and RNAPIII). May act at an RNAP assembly step prior to nuclear import. This chain is GPN-loop GTPase 2, found in Mus musculus (Mouse).